A 548-amino-acid polypeptide reads, in one-letter code: Membrane protein insertase YidC (548 aa).

A helical transmembrane segment spans residues 6–26 (NLLVIALLFVSFMIWQAWEQD). Residues 28-55 (NPQPQAQQTTQTTTTAAGSAADQGVPAS) are disordered. Over residues 30–50 (QPQAQQTTQTTTTAAGSAADQ) the composition is skewed to low complexity. 4 helical membrane-spanning segments follow: residues 350–370 (FVGNWGFSIIIITFIVRGIMY), 420–440 (LGGCFPLLIQMPIFLALYYML), 458–478 (LSAQDPYYILPILMGVTMFFI), and 499–519 (PVIFTVFFLWFPSGLVLYYIV).

This sequence belongs to the OXA1/ALB3/YidC family. Type 1 subfamily. Interacts with the Sec translocase complex via SecD. Specifically interacts with transmembrane segments of nascent integral membrane proteins during membrane integration.

Its subcellular location is the cell inner membrane. In terms of biological role, required for the insertion and/or proper folding and/or complex formation of integral membrane proteins into the membrane. Involved in integration of membrane proteins that insert both dependently and independently of the Sec translocase complex, as well as at least some lipoproteins. Aids folding of multispanning membrane proteins. The sequence is that of Membrane protein insertase YidC from Shigella flexneri.